The chain runs to 299 residues: ATP phosphoribosyltransferase (299 aa).

It belongs to the ATP phosphoribosyltransferase family. Long subfamily. As to quaternary structure, equilibrium between an active dimeric form, an inactive hexameric form and higher aggregates. Interconversion between the various forms is largely reversible and is influenced by the natural substrates and inhibitors of the enzyme. Mg(2+) serves as cofactor.

It localises to the cytoplasm. The catalysed reaction is 1-(5-phospho-beta-D-ribosyl)-ATP + diphosphate = 5-phospho-alpha-D-ribose 1-diphosphate + ATP. The protein operates within amino-acid biosynthesis; L-histidine biosynthesis; L-histidine from 5-phospho-alpha-D-ribose 1-diphosphate: step 1/9. Its activity is regulated as follows. Feedback inhibited by histidine. In terms of biological role, catalyzes the condensation of ATP and 5-phosphoribose 1-diphosphate to form N'-(5'-phosphoribosyl)-ATP (PR-ATP). Has a crucial role in the pathway because the rate of histidine biosynthesis seems to be controlled primarily by regulation of HisG enzymatic activity. The polypeptide is ATP phosphoribosyltransferase (Buchnera aphidicola subsp. Baizongia pistaciae (strain Bp)).